The sequence spans 353 residues: MPKNLRFSVFLLFLLCINSVFGEFGPEDAQYNETEARMLLSLSAAAYSLDVTPCIGRTFSPAENQTLLSTFSVRCDFVGNPCAGYIVVSDVLQQITVVFRGTKTSSQLLLEGWTTLKPSSDFYGMGLVNTYFRSGHEKTWQYVQDALSISQYRNYDVYVTGHSLGGALAGLCAPRIVHDGLRQSQKIKVVTFGEPRVGNIEFSRAYDQLVPYSFRVVHSGDVVPHLPGCVKDLSYTPPAGSDGSMPCDPVSTNGGYHHAIEIWYPGNMTQGDPFMVCTGLPRDEDFGCSDSLKVNLGDTNQGVWDHRNYFGVEVPDFGKGGCDPSMTFKGPPTKTGVLSLVGSVFGRKRRSIR.

Residues 1–22 (MPKNLRFSVFLLFLLCINSVFG) form the signal peptide. 2 N-linked (GlcNAc...) asparagine glycosylation sites follow: Asn32 and Asn64. Catalysis depends on Ser163, which acts as the Nucleophile. Asp221 serves as the catalytic Charge relay system. Asn267 carries N-linked (GlcNAc...) asparagine glycosylation. Cys277 and Cys288 form a disulfide bridge. His306 (charge relay system) is an active-site residue.

Belongs to the AB hydrolase superfamily. Lipase family.

The protein localises to the secreted. Functionally, probable lipase. The polypeptide is Lipase ZK262.3 (Caenorhabditis elegans).